The primary structure comprises 124 residues: Small ribosomal subunit protein uS12 (124 aa).

A 3-methylthioaspartic acid modification is found at D89.

It belongs to the universal ribosomal protein uS12 family. As to quaternary structure, part of the 30S ribosomal subunit. Contacts proteins S8 and S17. May interact with IF1 in the 30S initiation complex.

In terms of biological role, with S4 and S5 plays an important role in translational accuracy. Its function is as follows. Interacts with and stabilizes bases of the 16S rRNA that are involved in tRNA selection in the A site and with the mRNA backbone. Located at the interface of the 30S and 50S subunits, it traverses the body of the 30S subunit contacting proteins on the other side and probably holding the rRNA structure together. The combined cluster of proteins S8, S12 and S17 appears to hold together the shoulder and platform of the 30S subunit. This Vibrio vulnificus (strain CMCP6) protein is Small ribosomal subunit protein uS12.